Consider the following 348-residue polypeptide: Flagellar P-ring protein (348 aa).

The first 16 residues, Met-1–Ala-16, serve as a signal peptide directing secretion.

The protein belongs to the FlgI family. As to quaternary structure, the basal body constitutes a major portion of the flagellar organelle and consists of four rings (L,P,S, and M) mounted on a central rod.

Its subcellular location is the periplasm. It is found in the bacterial flagellum basal body. In terms of biological role, assembles around the rod to form the L-ring and probably protects the motor/basal body from shearing forces during rotation. This chain is Flagellar P-ring protein, found in Campylobacter jejuni subsp. doylei (strain ATCC BAA-1458 / RM4099 / 269.97).